Reading from the N-terminus, the 436-residue chain is GTPase Der (436 aa).

2 consecutive EngA-type G domains span residues 4 to 167 (PVVA…PKGG) and 176 to 351 (IKFC…DNHA). Residues 10–17 (GRPNVGKS), 57–61 (DTGGI), 119–122 (NKID), 182–189 (GRPNVGKS), 229–233 (DTAGM), and 294–297 (NKWD) contribute to the GTP site. Residues 352–436 (MRVQTNVLNE…PIKIIARPRK (85 aa)) form the KH-like domain.

This sequence belongs to the TRAFAC class TrmE-Era-EngA-EngB-Septin-like GTPase superfamily. EngA (Der) GTPase family. In terms of assembly, associates with the 50S ribosomal subunit.

Functionally, GTPase that plays an essential role in the late steps of ribosome biogenesis. The sequence is that of GTPase Der from Geobacillus kaustophilus (strain HTA426).